The chain runs to 52 residues: Large ribosomal subunit protein eL40 (52 aa).

It belongs to the eukaryotic ribosomal protein eL40 family.

This is Large ribosomal subunit protein eL40 from Thermococcus onnurineus (strain NA1).